The following is a 524-amino-acid chain: Cytochrome c nitrite reductase subunit NrfA (524 aa).

A signal peptide spans 1–24 (MNNQKTFKGLRLAALGLVAVAAFT). An interaction with NrfH region spans residues 29 to 39 (DVSTELKTPVY). Positions 78, 117, and 118 each coordinate Ca(2+). Positions 121, 147, 150, 151, 187, 190, and 191 each coordinate heme. Residues 221 to 222 (RN) form an interaction with NrfH region. Residues Cys229, Cys232, and His233 each coordinate heme. Positions 235, 236, 295, and 297 each coordinate Ca(2+). Residues His309, Cys316, Cys319, His320, His335, Cys349, Cys352, His353, and His434 each coordinate heme. Residues 318–331 (DCHMSYTRSDDKKK) are interaction with NrfH. The interval 351 to 355 (QCHSD) is interaction with NrfH.

Belongs to the cytochrome c-552 family. Component of the NrfHA cytochrome c nitrite reductase complex composed of 4 NrfA catalytic subunits and 2 NrfH quinone-binding subunits. NrfA homodimer interacts with NrfH. It depends on Ca(2+) as a cofactor. Heme serves as cofactor.

It localises to the cell inner membrane. It carries out the reaction 6 Fe(III)-[cytochrome c] + NH4(+) + 2 H2O = 6 Fe(II)-[cytochrome c] + nitrite + 8 H(+). Its function is as follows. Catalytic subunit of the cytochrome c nitrite reductase holocomplex NrfHA. Has both nitrite and sulfite reductase activities. Catalyzes the reduction of nitrite to ammonia, consuming six electrons acquired by the electron donor subunit NrfH from the menaquinone pool, in an anaerobic respiratory process of nitrite. The other biological function of the NrfHA holocomplex is to detoxify nitrite. This function is essential for the survival of this organism as it enables it to overcome inhibition by nitrite, which is produced by other organisms living in the same environment. The polypeptide is Cytochrome c nitrite reductase subunit NrfA (Nitratidesulfovibrio vulgaris (strain ATCC 29579 / DSM 644 / CCUG 34227 / NCIMB 8303 / VKM B-1760 / Hildenborough) (Desulfovibrio vulgaris)).